A 368-amino-acid chain; its full sequence is tRNA-specific 2-thiouridylase MnmA (368 aa).

Residues 11 to 18 (GMSGGVDS) and Met-37 each bind ATP. The tract at residues 97 to 99 (NPD) is interaction with target base in tRNA. Residue Cys-102 is the Nucleophile of the active site. An intrachain disulfide couples Cys-102 to Cys-199. Gly-127 is an ATP binding site. An interaction with tRNA region spans residues 149–151 (KDQ). Cys-199 acts as the Cysteine persulfide intermediate in catalysis. An interaction with tRNA region spans residues 311–312 (RY).

This sequence belongs to the MnmA/TRMU family. In terms of assembly, interacts with TusE.

Its subcellular location is the cytoplasm. The catalysed reaction is S-sulfanyl-L-cysteinyl-[protein] + uridine(34) in tRNA + AH2 + ATP = 2-thiouridine(34) in tRNA + L-cysteinyl-[protein] + A + AMP + diphosphate + H(+). In terms of biological role, catalyzes the 2-thiolation of uridine at the wobble position (U34) of tRNA(Lys), tRNA(Glu) and tRNA(Gln), leading to the formation of s(2)U34, the first step of tRNA-mnm(5)s(2)U34 synthesis. Sulfur is provided by IscS, via a sulfur-relay system. Binds ATP and its substrate tRNAs. The protein is tRNA-specific 2-thiouridylase MnmA of Shigella boydii serotype 4 (strain Sb227).